Here is a 218-residue protein sequence, read N- to C-terminus: Large ribosomal subunit protein uL3c (218 aa).

A disordered region spans residues 127–161; that stretch reads GFSRGPMTHGSKNHREPGSTGAGTTPGRIYPGKRM.

This sequence belongs to the universal ribosomal protein uL3 family. In terms of assembly, part of the 50S ribosomal subunit.

The protein resides in the plastid. The protein localises to the organellar chromatophore. Its function is as follows. One of the primary rRNA binding proteins, it binds directly near the 3'-end of the 23S rRNA, where it nucleates assembly of the 50S subunit. This Paulinella chromatophora protein is Large ribosomal subunit protein uL3c (rpl3).